The primary structure comprises 98 residues: uncharacterized protein (98 aa).

Helical transmembrane passes span 2–22 (IVTLLNALSAMAAFTAAGLWW) and 70–90 (AAKAAALAAACQGTAIALPIL).

It localises to the cell membrane. This is an uncharacterized protein from Sinorhizobium fredii (strain NBRC 101917 / NGR234).